The sequence spans 354 residues: MALTTHSGKLIPELQFKAHHFIDKTTVLYGPSKTGKTVYVKHIMKILQPHIEQILVVAPSEPSNRSYEGFVHPTLIHYRLWLADKQKKNDNKGAERFLEAIWQRQTMMSSIYSRVNNIDMLKTLYHKLPIDIQQKENKNIAKVECLKAEQTDQKKEEKITSLYQQLLKKIIIQNIHMYKNLCLTEDEKFTLNYINLNPRLLLILDDCAAELHPLFTKEIFKKFFYQNRHCFISMIICCQDDTDLPANLRKNAFVSIFTNASICMSNFSRQSNRYSKQDKEYVEEISHIVFKGYRKLVYIREDENRQHFYHSTVPLPTAFSFGSKALLKLCKAVYSKEVVIDKSNPYWSKFRLNF.

Belongs to the asfivirus B354L family.

This is an uncharacterized protein from Ornithodoros (relapsing fever ticks).